Consider the following 286-residue polypeptide: tRNA (guanine-N(7)-)-methyltransferase (286 aa).

2 positions are modified to phosphoserine: Ser7 and Ser59. S-adenosyl-L-methionine is bound by residues Gly103, 126 to 127 (EI), 161 to 162 (NA), and Cys181. The active site involves Asp184. S-adenosyl-L-methionine is bound at residue 259–261 (TEE).

It belongs to the class I-like SAM-binding methyltransferase superfamily. TrmB family. As to quaternary structure, forms a complex with TRM82.

It is found in the nucleus. It catalyses the reaction guanosine(46) in tRNA + S-adenosyl-L-methionine = N(7)-methylguanosine(46) in tRNA + S-adenosyl-L-homocysteine. The protein operates within tRNA modification; N(7)-methylguanine-tRNA biosynthesis. In terms of biological role, methyltransferase that catalyzes the formation of N(7)-methylguanine at position 46 (m7G46) in tRNA, a modification required to maintain stability of tRNAs; its absence resulting in tRNA decay. Both the D-stem and T-stem structures of tRNAs are required for efficient methyltransferase activity. The polypeptide is tRNA (guanine-N(7)-)-methyltransferase (Saccharomyces cerevisiae (strain YJM789) (Baker's yeast)).